A 496-amino-acid chain; its full sequence is GTPase Der (496 aa).

EngA-type G domains are found at residues Pro-3–Lys-168 and Ile-210–Thr-383. GTP is bound by residues Gly-9–Ser-16, Asp-56–Ile-60, Asn-120–Asp-123, Gly-216–Ser-223, Asp-263–Val-267, and Asn-328–Asp-331. Residues Lys-384 to Glu-468 form the KH-like domain.

This sequence belongs to the TRAFAC class TrmE-Era-EngA-EngB-Septin-like GTPase superfamily. EngA (Der) GTPase family. As to quaternary structure, associates with the 50S ribosomal subunit.

Its function is as follows. GTPase that plays an essential role in the late steps of ribosome biogenesis. In Hamiltonella defensa subsp. Acyrthosiphon pisum (strain 5AT), this protein is GTPase Der.